Here is a 541-residue protein sequence, read N- to C-terminus: Probable malate:quinone oxidoreductase (541 aa).

Positions 520-541 (AKPAAGAAQQAKPAKATADIAL) are disordered.

Belongs to the MQO family. The cofactor is FAD.

It catalyses the reaction (S)-malate + a quinone = a quinol + oxaloacetate. Its pathway is carbohydrate metabolism; tricarboxylic acid cycle; oxaloacetate from (S)-malate (quinone route): step 1/1. The protein is Probable malate:quinone oxidoreductase of Ralstonia nicotianae (strain ATCC BAA-1114 / GMI1000) (Ralstonia solanacearum).